The sequence spans 159 residues: Phosphopantetheine adenylyltransferase (159 aa).

Residue Thr8 coordinates substrate. ATP is bound by residues 8-9 and His16; that span reads TF. Residues Lys40, Thr72, and Arg86 each coordinate substrate. ATP-binding positions include 87–89, Glu97, and 122–128; these read GLR and YSFLSSS.

This sequence belongs to the bacterial CoaD family. In terms of assembly, homohexamer. The cofactor is Mg(2+).

The protein localises to the cytoplasm. It carries out the reaction (R)-4'-phosphopantetheine + ATP + H(+) = 3'-dephospho-CoA + diphosphate. Its pathway is cofactor biosynthesis; coenzyme A biosynthesis; CoA from (R)-pantothenate: step 4/5. Functionally, reversibly transfers an adenylyl group from ATP to 4'-phosphopantetheine, yielding dephospho-CoA (dPCoA) and pyrophosphate. The protein is Phosphopantetheine adenylyltransferase of Prochlorococcus marinus subsp. pastoris (strain CCMP1986 / NIES-2087 / MED4).